Reading from the N-terminus, the 539-residue chain is MAVPFLSSSLQLTPTSPILFTKVTPTPIIHNHRSTCTIPTKPRLRLLRRSAVAGTAVSDQTEGGGDVLLNPEEEKRVEVADYDWTEEWYPLYLTKNVPEDAPLGLTVYDRQIVLYKDGEGTLRCYEDRCPHRLAKLSEGQLIDGRLECLYHGWQFEGEGKCVKIPQLPASAKIPKAACVKTYEVKDSQGVVWVWMSTKTPPNPEKLPWFENFARPGFFDISTTHELPYDHSILLENLMDPAHVPISHDRTDFTAKREDAQPLVFEVTERSNRGFAGTWGREKEGGKGSNLLRFDAPCVLQNNREFEGKDGVKNYFSGLFLCRPTGQGKSMLIVRFGVTKRSPLVSVLPQWFWHQNACKVFEQDMGFLSSQNEVLMKEKVPTKDLYLNLKSSDTWVAEYRKWMDKVGHGMPYHFGHRTISLPKVPPVVEHAPAGLIAALSASYPAKGGIGTMHAPNLANRYFRHIIHCRSCSNVIKSFELWKNILSATAVALTALAILVVSRQWKAVLLGSAALCSAAAYTCLRAINLNTNNFIRTHRRL.

The N-terminal 50 residues, 1–50 (MAVPFLSSSLQLTPTSPILFTKVTPTPIIHNHRSTCTIPTKPRLRLLRRS), are a transit peptide targeting the chloroplast. Ala-51 carries the N-acetylalanine modification. At 51-482 (AVAGTAVSDQ…VIKSFELWKN (432 aa)) the chain is on the stromal side. In terms of domain architecture, Rieske spans 88 to 193 (WYPLYLTKNV…VKDSQGVVWV (106 aa)). Cys-129, His-131, Cys-148, and His-151 together coordinate [2Fe-2S] cluster. Residues His-242 and His-247 each contribute to the Fe cation site. Residues 467–470 (CRSC) carry the Redox-active motif motif. The helical transmembrane segment at 483 to 500 (ILSATAVALTALAILVVS) threads the bilayer. Residues 501 to 504 (RQWK) are Chloroplast intermembrane-facing. The chain crosses the membrane as a helical span at residues 505-527 (AVLLGSAALCSAAAYTCLRAINL). Topologically, residues 528 to 539 (NTNNFIRTHRRL) are stromal.

In terms of assembly, part of the Tic complex. Interacts with TIC62 and TIC110. [2Fe-2S] cluster serves as cofactor. In terms of tissue distribution, highly expressed in green tissues and very low levels in non-photosynthetic tissues such as roots and etiolated seedlings.

The protein localises to the plastid. It is found in the chloroplast inner membrane. Functionally, involved in protein precursor import into chloroplasts. Part of the redox regulon consisting of TIC32, TIC 55 and TIC62. The sequence is that of Protein TIC 55, chloroplastic (TIC55) from Arabidopsis thaliana (Mouse-ear cress).